Reading from the N-terminus, the 895-residue chain is Protein translocase subunit SecA (895 aa).

ATP-binding positions include Q87, 105–109 (GEGKT), and D512. The span at 833 to 852 (TQEEVEQAERQRQEMAKRET) shows a compositional bias: basic and acidic residues. Positions 833–895 (TQEEVEQAER…KHCHGSKAKY (63 aa)) are disordered. Zn(2+) is bound by residues C877, C879, C888, and H889. Residues 883 to 895 (KKYKHCHGSKAKY) are compositionally biased toward basic residues.

Belongs to the SecA family. In terms of assembly, monomer and homodimer. Part of the essential Sec protein translocation apparatus which comprises SecA, SecYEG and auxiliary proteins SecDF-YajC and YidC. The cofactor is Zn(2+).

The protein resides in the cell inner membrane. It localises to the cytoplasm. It catalyses the reaction ATP + H2O + cellular proteinSide 1 = ADP + phosphate + cellular proteinSide 2.. Functionally, part of the Sec protein translocase complex. Interacts with the SecYEG preprotein conducting channel. Has a central role in coupling the hydrolysis of ATP to the transfer of proteins into and across the cell membrane, serving both as a receptor for the preprotein-SecB complex and as an ATP-driven molecular motor driving the stepwise translocation of polypeptide chains across the membrane. The chain is Protein translocase subunit SecA from Pasteurella multocida (strain Pm70).